The following is a 333-amino-acid chain: 6-phosphogluconolactonase (333 aa).

Belongs to the cycloisomerase 2 family.

The catalysed reaction is 6-phospho-D-glucono-1,5-lactone + H2O = 6-phospho-D-gluconate + H(+). It functions in the pathway carbohydrate degradation; pentose phosphate pathway; D-ribulose 5-phosphate from D-glucose 6-phosphate (oxidative stage): step 2/3. Catalyzes the hydrolysis of 6-phosphogluconolactone to 6-phosphogluconate. This chain is 6-phosphogluconolactonase, found in Buchnera aphidicola subsp. Schizaphis graminum (strain Sg).